A 904-amino-acid polypeptide reads, in one-letter code: Translation initiation factor IF-2 (904 aa).

Disordered regions lie at residues Y103–E122, N137–G252, and H267–P315. Positions N137 to E177 are enriched in basic and acidic residues. Composition is skewed to low complexity over residues E178 to A230 and R280 to R293. Residues S403–K572 form the tr-type G domain. Residues G412–T419 form a G1 region. Position 412-419 (G412–T419) interacts with GTP. The segment at G437–H441 is G2. A G3 region spans residues D458 to G461. GTP-binding positions include D458–H462 and N512–D515. The interval N512–D515 is G4. Positions S548–K550 are G5.

The protein belongs to the TRAFAC class translation factor GTPase superfamily. Classic translation factor GTPase family. IF-2 subfamily.

It is found in the cytoplasm. In terms of biological role, one of the essential components for the initiation of protein synthesis. Protects formylmethionyl-tRNA from spontaneous hydrolysis and promotes its binding to the 30S ribosomal subunits. Also involved in the hydrolysis of GTP during the formation of the 70S ribosomal complex. This is Translation initiation factor IF-2 from Xanthomonas euvesicatoria pv. vesicatoria (strain 85-10) (Xanthomonas campestris pv. vesicatoria).